Consider the following 270-residue polypeptide: tRNA pseudouridine synthase A (270 aa).

The Nucleophile role is filled by Asp-60. Residue Tyr-118 participates in substrate binding.

It belongs to the tRNA pseudouridine synthase TruA family. As to quaternary structure, homodimer.

It carries out the reaction uridine(38/39/40) in tRNA = pseudouridine(38/39/40) in tRNA. Its function is as follows. Formation of pseudouridine at positions 38, 39 and 40 in the anticodon stem and loop of transfer RNAs. This chain is tRNA pseudouridine synthase A, found in Salmonella arizonae (strain ATCC BAA-731 / CDC346-86 / RSK2980).